We begin with the raw amino-acid sequence, 150 residues long: 3-hydroxyacyl-[acyl-carrier-protein] dehydratase FabZ (150 aa).

His-51 is a catalytic residue.

It belongs to the thioester dehydratase family. FabZ subfamily.

Its subcellular location is the cytoplasm. The catalysed reaction is a (3R)-hydroxyacyl-[ACP] = a (2E)-enoyl-[ACP] + H2O. Its function is as follows. Involved in unsaturated fatty acids biosynthesis. Catalyzes the dehydration of short chain beta-hydroxyacyl-ACPs and long chain saturated and unsaturated beta-hydroxyacyl-ACPs. The chain is 3-hydroxyacyl-[acyl-carrier-protein] dehydratase FabZ from Legionella pneumophila (strain Lens).